Reading from the N-terminus, the 100-residue chain is Ferredoxin-2 (100 aa).

Positions 4-97 constitute a 2Fe-2S ferredoxin-type domain; that stretch reads YKVTLINEEE…DCTIMTHQES (94 aa). 4 residues coordinate [2Fe-2S] cluster: Cys42, Cys47, Cys50, and Cys81.

This sequence belongs to the 2Fe2S plant-type ferredoxin family. It depends on [2Fe-2S] cluster as a cofactor.

In terms of biological role, ferredoxins are iron-sulfur proteins that transfer electrons in a wide variety of metabolic reactions. This chain is Ferredoxin-2, found in Aphanothece sacrum.